A 234-amino-acid chain; its full sequence is Adenosine 5'-phosphosulfate reductase (234 aa).

[4Fe-4S] cluster is bound by residues Cys120, Cys121, Cys203, and Cys206. Cys229 acts as the Nucleophile; cysteine thiosulfonate intermediate in catalysis.

Belongs to the PAPS reductase family. CysH subfamily. [4Fe-4S] cluster serves as cofactor.

Its subcellular location is the cytoplasm. The enzyme catalyses [thioredoxin]-disulfide + sulfite + AMP + 2 H(+) = adenosine 5'-phosphosulfate + [thioredoxin]-dithiol. The protein operates within sulfur metabolism; hydrogen sulfide biosynthesis; sulfite from sulfate. Catalyzes the formation of sulfite from adenosine 5'-phosphosulfate (APS) using thioredoxin as an electron donor. The protein is Adenosine 5'-phosphosulfate reductase of Bacillus cereus (strain ZK / E33L).